The sequence spans 685 residues: uncharacterized protein (685 aa).

2 disordered regions span residues 502 to 538 and 635 to 685; these read NLNQ…SLNK and RSKR…IHNA. The span at 518–538 shows a compositional bias: polar residues; that stretch reads SSENMTKFPSSRGKSTVSLNK. Basic residues predominate over residues 675–685; that stretch reads KLKKSLIIHNA.

This is an uncharacterized protein from Homo sapiens (Human).